The sequence spans 343 residues: Heat-inducible transcription repressor HrcA (343 aa).

Belongs to the HrcA family.

Negative regulator of class I heat shock genes (grpE-dnaK-dnaJ and groELS operons). Prevents heat-shock induction of these operons. The sequence is that of Heat-inducible transcription repressor HrcA from Thermoanaerobacter pseudethanolicus (strain ATCC 33223 / 39E) (Clostridium thermohydrosulfuricum).